The primary structure comprises 612 residues: Bile salt-activated lipase (612 aa).

The first 20 residues, 1 to 20 (MGRLEVLFLGLTCCLAAACA), serve as a signal peptide directing secretion. Cysteines 84 and 100 form a disulfide. A glycan (N-linked (GlcNAc...) asparagine) is linked at N207. The active-site Acyl-ester intermediate is S214. A disulfide bond links C266 and C277. Active-site charge relay system residues include D340 and H455. The interval 553-612 (VGDHTPPEDDSEAAPVPPTDDSQGGPVPPTDDSQTTPVPPTDNSQAGDSVEAQMPGPIGF) is disordered. 4 repeat units span residues 556–566 (HTPPEDDSEAA), 567–577 (PVPPTDDSQGG), 578–588 (PVPPTDDSQTT), and 589–599 (PVPPTDNSQAG). A 4 X 11 AA tandem repeats, O-glycosylated region region spans residues 556 to 599 (HTPPEDDSEAAPVPPTDDSQGGPVPPTDDSQTTPVPPTDNSQAG). Residues 583-599 (DDSQTTPVPPTDNSQAG) show a composition bias toward polar residues.

This sequence belongs to the type-B carboxylesterase/lipase family. Interacts with CLC. As to expression, synthesized primarily in the pancreas and then transported to the intestine.

It is found in the secreted. It catalyses the reaction a triacylglycerol + H2O = a diacylglycerol + a fatty acid + H(+). It carries out the reaction 1,2,3-tri-(9Z-octadecenoyl)-glycerol + H2O = di-(9Z)-octadecenoylglycerol + (9Z)-octadecenoate + H(+). The enzyme catalyses 1,2,3-trioctanoylglycerol + H2O = dioctanoylglycerol + octanoate + H(+). The catalysed reaction is a sterol ester + H2O = a sterol + a fatty acid + H(+). It catalyses the reaction cholesteryl (9Z-octadecenoate) + H2O = cholesterol + (9Z)-octadecenoate + H(+). It carries out the reaction an acetyl ester + H2O = an aliphatic alcohol + acetate + H(+). The enzyme catalyses a butanoate ester + H2O = an aliphatic alcohol + butanoate + H(+). The catalysed reaction is 9-hexadecanoyloxy-octadecanoate + H2O = 9-hydroxy-octadecanoate + hexadecanoate + H(+). It catalyses the reaction 9-(9Z-octadecenoyloxy)-octadecanoate + H2O = 9-hydroxy-octadecanoate + (9Z)-octadecenoate + H(+). It carries out the reaction 1-hexadecanoyl-sn-glycero-3-phosphocholine + H2O = sn-glycerol 3-phosphocholine + hexadecanoate + H(+). The enzyme catalyses 12-hexadecanoyloxy-octadecanoate + H2O = 12-hydroxyoctadecanoate + hexadecanoate + H(+). The catalysed reaction is 12-(9Z-octadecenoyloxy)-octadecanoate + H2O = 12-hydroxyoctadecanoate + (9Z)-octadecenoate + H(+). It catalyses the reaction 13-(9Z-octadecenoyloxy)-octadecanoate + H2O = 13-hydroxy-octadecanoate + (9Z)-octadecenoate + H(+). It carries out the reaction 9-(9Z-hexadecenoyloxy)-octadecanoate + H2O = (9Z)-hexadecenoate + 9-hydroxy-octadecanoate + H(+). The enzyme catalyses 12-(9Z-hexadecenoyloxy)-octadecanoate + H2O = 12-hydroxyoctadecanoate + (9Z)-hexadecenoate + H(+). The catalysed reaction is 13-(9Z-hexadecenoyloxy)-octadecanoate + H2O = 13-hydroxy-octadecanoate + (9Z)-hexadecenoate + H(+). It catalyses the reaction 12-octadecanoyloxy-octadecanoate + H2O = 12-hydroxyoctadecanoate + octadecanoate + H(+). It carries out the reaction 13-octadecanoyloxy-octadecanoate + H2O = 13-hydroxy-octadecanoate + octadecanoate + H(+). The enzyme catalyses 5-(9Z-hexadecenoyloxy)-octadecanoate + H2O = 5-hydroxy-octadecanoate + (9Z)-hexadecenoate + H(+). The catalysed reaction is 9-octadecanoyloxy-octadecanoate + H2O = 9-hydroxy-octadecanoate + octadecanoate + H(+). Its activity is regulated as follows. Activated by bile salts such as sodium taurocholate. Catalyzes the hydrolysis of a wide range of substrates including cholesteryl esters, phospholipids, lysophospholipids, di- and tri-acylglycerols, and fatty acid esters of hydroxy fatty acids (FAHFA). Preferentially hydrolyzes FAHFAs with the ester bond further away from the carboxylate. Unsaturated FAHFAs are hydrolyzed more quickly than saturated FAHFAs. Has an essential role in the complete digestion of dietary lipids and their intestinal absorption, along with the absorption of fat-soluble vitamins. The chain is Bile salt-activated lipase (Cel) from Rattus norvegicus (Rat).